A 113-amino-acid polypeptide reads, in one-letter code: PTS system fructose-like EIIB component 3 (113 aa).

The 100-residue stretch at 1-100 folds into the PTS EIIB type-2 domain; the sequence is MAYLVAVTAC…PQRVMSAVRK (100 aa). Cys10 serves as the catalytic Phosphocysteine intermediate. Cys10 carries the post-translational modification Phosphocysteine; by EIIA.

It localises to the cytoplasm. It carries out the reaction D-fructose(out) + N(pros)-phospho-L-histidyl-[protein] = D-fructose 1-phosphate(in) + L-histidyl-[protein]. Functionally, the phosphoenolpyruvate-dependent sugar phosphotransferase system (sugar PTS), a major carbohydrate active transport system, catalyzes the phosphorylation of incoming sugar substrates concomitantly with their translocation across the cell membrane. The polypeptide is PTS system fructose-like EIIB component 3 (frwD) (Escherichia coli (strain K12)).